Reading from the N-terminus, the 604-residue chain is Netrin-1 (604 aa).

The N-terminal stretch at 1-24 (MMRAVWEALAALAAVACLVGAVRG) is a signal peptide. The region spanning 47–284 (HPRRCIPDFV…AVSDLQVGGR (238 aa)) is the Laminin N-terminal domain. 3 N-linked (GlcNAc...) asparagine glycosylation sites follow: Asn-95, Asn-116, and Asn-131. 15 disulfide bridges follow: Cys-119–Cys-152, Cys-285–Cys-294, Cys-287–Cys-304, Cys-306–Cys-315, Cys-318–Cys-338, Cys-341–Cys-350, Cys-343–Cys-368, Cys-371–Cys-380, Cys-383–Cys-401, Cys-404–Cys-416, Cys-406–Cys-423, Cys-425–Cys-434, Cys-437–Cys-451, Cys-472–Cys-544, and Cys-491–Cys-601. Laminin EGF-like domains are found at residues 285–340 (CKCN…ECVA), 341–403 (CNCN…ACKA), and 404–453 (CDCH…PCIK). Residue Asn-417 is glycosylated (N-linked (GlcNAc...) asparagine). Positions 472-601 (CDSYCKASKG…FQQREKKGKC (130 aa)) constitute an NTR domain. Residues 530–532 (RGD) carry the Cell attachment site motif.

As to quaternary structure, binds to its receptors; DCC, UNC5A, UNC5B, UNC5C and probably UNC5D. Binds to its receptor; DSCAM. Interacts with DCC. Interacts with APP. Widely expressed in normal adult tissues with highest levels in heart, small intestine, colon, liver and prostate. Reduced expression in brain tumors and neuroblastomas. Expressed in epididymis (at protein level).

The protein resides in the secreted. It localises to the cytoplasm. Functionally, netrins control guidance of CNS commissural axons and peripheral motor axons. Its association with either DCC or some UNC5 receptors will lead to axon attraction or repulsion, respectively. Binding to UNC5C might cause dissociation of UNC5C from polymerized TUBB3 in microtubules and thereby lead to increased microtubule dynamics and axon repulsion. Involved in dorsal root ganglion axon projection towards the spinal cord. It also serves as a survival factor via its association with its receptors which prevent the initiation of apoptosis. Involved in tumorigenesis by regulating apoptosis. The polypeptide is Netrin-1 (NTN1) (Homo sapiens (Human)).